The following is a 109-amino-acid chain: MLALYTLGLFILTAVTEIVGCYLPYLWLKKSAPGWVLLPAAASLAMFAWLLSLHPTDAGRVYAAYGGVYVFVALLWLWGVEGVRPHPWDFVGVAVALAGMGIIMFAPRG.

Transmembrane regions (helical) follow at residues 1–21 (MLAL…IVGC), 33–53 (PGWV…LLSL), 63–83 (AAYG…VEGV), and 87–107 (PWDF…MFAP).

It belongs to the UPF0060 family.

It is found in the cell inner membrane. The polypeptide is UPF0060 membrane protein ABO_1373 (Alcanivorax borkumensis (strain ATCC 700651 / DSM 11573 / NCIMB 13689 / SK2)).